A 344-amino-acid chain; its full sequence is Mitochondrial substrate carrier family protein D (344 aa).

Residues 1–22 lie on the Mitochondrial intermembrane side of the membrane; it reads MDSTKTNNKWAAAGILNSVGKD. Solcar repeat units follow at residues 17–104, 119–212, and 239–327; these read NSVG…CQSY, IPYH…MKRK, and VPAW…TRNL. Residues 23–43 form a helical membrane-spanning segment; sequence FVAGSVGGMSSIMAGHPFDTI. Residues 44-75 are Mitochondrial matrix-facing; it reads KVMLQDASGNLPKFKNGFQALKYIMKVDGIKG. The chain crosses the membrane as a helical span at residues 76–96; the sequence is IYRGLSVPLFSVSFTNSVFFA. The Mitochondrial intermembrane segment spans residues 97–116; sequence TNNFCQSYFHPPCKDENGED. The chain crosses the membrane as a helical span at residues 117 to 137; the sequence is ILIPYHKAAAAGAIAGGVISL. Over 138-186 the chain is Mitochondrial matrix; that stretch reads LITPRDLVKSKLQVQCRPFGSTNVSLQYKGPIDVIRQTIKRDGIKGMFK. The helical transmembrane segment at 187 to 207 threads the bilayer; the sequence is GIRSTFCRDIPGDAVYFVVYE. Topologically, residues 208–238 are mitochondrial intermembrane; it reads FMKRKLLALSKNNNNNNNNNDNNDNSSPKAG. Residues 239-259 traverse the membrane as a helical segment; the sequence is VPAWVAIGAGGCAGMSFWMSI. At 260–301 the chain is on the mitochondrial matrix side; it reads YPMDVVKTRIQTQPDHLPPQYTSVLQTITKIYREEGISVFFR. Residues 302 to 321 traverse the membrane as a helical segment; the sequence is GFSATILRAFPTSAVNFLMY. The Mitochondrial intermembrane segment spans residues 322–344; the sequence is ETTRNLLNSKDPFYNNNDHYNAE.

This sequence belongs to the mitochondrial carrier (TC 2.A.29) family.

It is found in the mitochondrion inner membrane. In terms of biological role, calcium-dependent mitochondrial solute carrier. Mitochondrial solute carriers shuttle metabolites, nucleotides, and cofactors through the mitochondrial inner membrane. The protein is Mitochondrial substrate carrier family protein D (mcfD) of Dictyostelium discoideum (Social amoeba).